A 328-amino-acid chain; its full sequence is Methionyl-tRNA formyltransferase (328 aa).

A (6S)-5,6,7,8-tetrahydrofolate-binding site is contributed by 110 to 113 (SNLP).

It belongs to the Fmt family.

The catalysed reaction is L-methionyl-tRNA(fMet) + (6R)-10-formyltetrahydrofolate = N-formyl-L-methionyl-tRNA(fMet) + (6S)-5,6,7,8-tetrahydrofolate + H(+). Its function is as follows. Attaches a formyl group to the free amino group of methionyl-tRNA(fMet). The formyl group appears to play a dual role in the initiator identity of N-formylmethionyl-tRNA by promoting its recognition by IF2 and preventing the misappropriation of this tRNA by the elongation apparatus. This Bifidobacterium longum (strain DJO10A) protein is Methionyl-tRNA formyltransferase.